A 146-amino-acid chain; its full sequence is Small ribosomal subunit protein uS5 (146 aa).

Residues 8–71 (FKEVVVNIGR…DDAFKNIIKV (64 aa)) enclose the S5 DRBM domain.

It belongs to the universal ribosomal protein uS5 family. Part of the 30S ribosomal subunit. Contacts proteins S4 and S8.

With S4 and S12 plays an important role in translational accuracy. Functionally, located at the back of the 30S subunit body where it stabilizes the conformation of the head with respect to the body. The polypeptide is Small ribosomal subunit protein uS5 (Wolinella succinogenes (strain ATCC 29543 / DSM 1740 / CCUG 13145 / JCM 31913 / LMG 7466 / NCTC 11488 / FDC 602W) (Vibrio succinogenes)).